The chain runs to 156 residues: Small ribosomal subunit protein uS7 (156 aa).

It belongs to the universal ribosomal protein uS7 family. As to quaternary structure, part of the 30S ribosomal subunit. Contacts proteins S9 and S11.

Its function is as follows. One of the primary rRNA binding proteins, it binds directly to 16S rRNA where it nucleates assembly of the head domain of the 30S subunit. Is located at the subunit interface close to the decoding center, probably blocks exit of the E-site tRNA. This is Small ribosomal subunit protein uS7 from Thiomonas delicata (Thiomonas cuprina).